Reading from the N-terminus, the 197-residue chain is uncharacterized protein (197 aa).

The next 4 helical transmembrane spans lie at 30-50 (WVAM…VEMA), 61-81 (LVAG…PPLV), 101-121 (LWSV…LGLA), and 130-150 (IGEF…VAML).

It is found in the cell membrane. This is an uncharacterized protein from Mycobacterium tuberculosis (strain CDC 1551 / Oshkosh).